A 583-amino-acid polypeptide reads, in one-letter code: CTP synthase (583 aa).

The amidoligase domain stretch occupies residues 1 to 278 (MRRHPQTATK…DAFVVRRLNL (278 aa)). Serine 20 is a binding site for CTP. Residue serine 20 participates in UTP binding. Residues 21–26 (SLGKGL) and aspartate 78 each bind ATP. 2 residues coordinate Mg(2+): aspartate 78 and glutamate 152. CTP-binding positions include 159–161 (DIE), 199–204 (KTKPTQ), and lysine 235. UTP-binding positions include 199-204 (KTKPTQ) and lysine 235. Residues 303-551 (RIALVGKYVE…VKAAIDYKEG (249 aa)) enclose the Glutamine amidotransferase type-1 domain. Glycine 366 provides a ligand contact to L-glutamine. The active-site Nucleophile; for glutamine hydrolysis is cysteine 393. L-glutamine-binding positions include 394–397 (LGLQ), glutamate 416, and arginine 477. Active-site residues include histidine 524 and glutamate 526. The disordered stretch occupies residues 559-583 (PERVSNGAERRDQVGQSIPEPANRG).

Belongs to the CTP synthase family. Homotetramer.

It carries out the reaction UTP + L-glutamine + ATP + H2O = CTP + L-glutamate + ADP + phosphate + 2 H(+). The catalysed reaction is L-glutamine + H2O = L-glutamate + NH4(+). The enzyme catalyses UTP + NH4(+) + ATP = CTP + ADP + phosphate + 2 H(+). It participates in pyrimidine metabolism; CTP biosynthesis via de novo pathway; CTP from UDP: step 2/2. With respect to regulation, allosterically activated by GTP, when glutamine is the substrate; GTP has no effect on the reaction when ammonia is the substrate. The allosteric effector GTP functions by stabilizing the protein conformation that binds the tetrahedral intermediate(s) formed during glutamine hydrolysis. Inhibited by the product CTP, via allosteric rather than competitive inhibition. Functionally, catalyzes the ATP-dependent amination of UTP to CTP with either L-glutamine or ammonia as the source of nitrogen. Regulates intracellular CTP levels through interactions with the four ribonucleotide triphosphates. In Mycobacterium ulcerans (strain Agy99), this protein is CTP synthase.